A 292-amino-acid chain; its full sequence is Ribosomal RNA small subunit methyltransferase A (292 aa).

Residues asparagine 28, leucine 30, glycine 55, glutamate 76, aspartate 101, and asparagine 126 each contribute to the S-adenosyl-L-methionine site.

The protein belongs to the class I-like SAM-binding methyltransferase superfamily. rRNA adenine N(6)-methyltransferase family. RsmA subfamily.

It is found in the cytoplasm. It carries out the reaction adenosine(1518)/adenosine(1519) in 16S rRNA + 4 S-adenosyl-L-methionine = N(6)-dimethyladenosine(1518)/N(6)-dimethyladenosine(1519) in 16S rRNA + 4 S-adenosyl-L-homocysteine + 4 H(+). Functionally, specifically dimethylates two adjacent adenosines (A1518 and A1519) in the loop of a conserved hairpin near the 3'-end of 16S rRNA in the 30S particle. May play a critical role in biogenesis of 30S subunits. The sequence is that of Ribosomal RNA small subunit methyltransferase A from Bacillus cytotoxicus (strain DSM 22905 / CIP 110041 / 391-98 / NVH 391-98).